Consider the following 581-residue polypeptide: Activating signal cointegrator 1 (581 aa).

The residue at position 2 (alanine 2) is an N-acetylalanine. A disordered region spans residues 97 to 118 (KSGDHLKRGRKKGRNRQEVPAF). A C4-type zinc finger spans residues 171–187 (CDCLGQKHKLINNCLIC). Residues 200–300 (CLFCGTLVCT…ASDSNQWLSK (101 aa)) form a mediates interaction with DDRGK1 region. Serine 276 bears the Phosphoserine mark. Tyrosine 289 carries the phosphotyrosine modification. A mediates interaction with UFL1 region spans residues 300 to 400 (KLERETLQKR…WVDHTGAASQ (101 aa)). Residues lysine 324, lysine 325, and lysine 334 each participate in a glycyl lysine isopeptide (Lys-Gly) (interchain with G-Cter in UFM1) cross-link. Phosphoserine is present on serine 341. Lysine 367 participates in a covalent cross-link: Glycyl lysine isopeptide (Lys-Gly) (interchain with G-Cter in UFM1). One can recognise an ASCH domain in the interval 437–531 (LSVHQPWASL…FKEQFPDISQ (95 aa)).

In terms of assembly, interacts with the thyroid hormone receptor/TR (via the ligand-binding domain); this interaction requires the presence of thyroid hormone. Interacts with the androgen receptor/AR; in an androgen, testosterone and dihydrotestosterone-dependent manner. Interacts with ESR1 (estrogen ligand-bound); competes with UFSP2. Interacts with UFSP2; competes with ligand-bound ESR1. Interacts with DDRGK1 and UFL1; the interaction with DDRGK1 is direct. Interacts with NCOA1. Interacts with EP300. Part of the ASC-1 complex, that contains TRIP4, ASCC1, ASCC2 and ASCC3. Identified in the RQT (ribosome quality control trigger) complex, that contains ASCC2, ASCC3 and TRIP4. Interacts with NEK6. Interacts with CSRP1. Interacts with ZCCHC4. In terms of processing, phosphorylated by NEK6. Post-translationally, polyufmylated by the UFM1-conjugating system composed of the enzymes UBA5, UFC1 and UFL1. Deufmylated by the protease UFSP2. Ufmylation of TRIP4 is promoted by ligand-bound nuclear receptors that compete with UFSP2 for interaction with TRIP4. Nuclear receptors-induced ufmylation promotes the recruitment of additional transcriptional coactivators like EP300 and NCOA1 and therefore the assembly of a coactivator complex facilitating nuclear receptor-mediated transcription.

It is found in the nucleus. It localises to the cytoplasm. The protein localises to the cytosol. The protein resides in the cytoskeleton. Its subcellular location is the microtubule organizing center. It is found in the centrosome. Functionally, transcription coactivator which associates with nuclear receptors, transcriptional coactivators including EP300, CREBBP and NCOA1, and basal transcription factors like TBP and TFIIA to facilitate nuclear receptors-mediated transcription. May thereby play an important role in establishing distinct coactivator complexes under different cellular conditions. Plays a role in thyroid hormone receptor and estrogen receptor transactivation. Also involved in androgen receptor transactivation. Plays a pivotal role in the transactivation of NF-kappa-B, SRF and AP1. Acts as a mediator of transrepression between nuclear receptor and either AP1 or NF-kappa-B. May play a role in the development of neuromuscular junction. May play a role in late myogenic differentiation. Also functions as part of the RQC trigger (RQT) complex that activates the ribosome quality control (RQC) pathway, a pathway that degrades nascent peptide chains during problematic translation. The sequence is that of Activating signal cointegrator 1 from Homo sapiens (Human).